We begin with the raw amino-acid sequence, 92 residues long: Small ribosomal subunit protein uS19c (92 aa).

This sequence belongs to the universal ribosomal protein uS19 family.

The protein resides in the plastid. It localises to the chloroplast. Functionally, protein S19 forms a complex with S13 that binds strongly to the 16S ribosomal RNA. This Morus indica (Mulberry) protein is Small ribosomal subunit protein uS19c.